The following is a 544-amino-acid chain: Terpene synthase 9 (544 aa).

Mg(2+) contacts are provided by aspartate 296, aspartate 300, and glutamate 449. Positions 296–300 (DDTFD) match the DDXXD motif motif.

It belongs to the terpene synthase family. Tpsa subfamily. Mg(2+) is required as a cofactor. The cofactor is Mn(2+).

It catalyses the reaction (2E,6E)-farnesyl diphosphate = (1E,4E)-germacrene B + diphosphate. The catalysed reaction is (2E)-geranyl diphosphate = terpinolene + diphosphate. It carries out the reaction (2E)-geranyl diphosphate = limonene + diphosphate. The enzyme catalyses (2E)-geranyl diphosphate = beta-myrcene + diphosphate. It catalyses the reaction (2Z,6Z)-farnesyl diphosphate = germacrene A + diphosphate. The catalysed reaction is (2Z,6Z)-farnesyl diphosphate = alpha-humulene + diphosphate. It functions in the pathway secondary metabolite biosynthesis; terpenoid biosynthesis. Its function is as follows. Sesquiterpene synthase involved in the biosynthesis of volatile compounds. Mediates the conversion of (2E,6E)-farnesyl diphosphate (FPP) into (1E,4E)-germacrene B, but also smaller amounts of germacrene A and C, and of (2Z,6Z)-farnesyl diphosphate ((ZZ)-FPP) into alpha-humulene, germacrene A and germacrene B. Can act with a low efficiency as a monoterpene synthase with geranyl diphosphate (GPP) as substrate, thus producing beta-myrcene, limonene and terpinolene. This is Terpene synthase 9 from Solanum habrochaites (Wild tomato).